Reading from the N-terminus, the 100-residue chain is Integration host factor subunit alpha (100 aa).

It belongs to the bacterial histone-like protein family. In terms of assembly, heterodimer of an alpha and a beta chain.

Its function is as follows. This protein is one of the two subunits of integration host factor, a specific DNA-binding protein that functions in genetic recombination as well as in transcriptional and translational control. In Ectopseudomonas mendocina (strain ymp) (Pseudomonas mendocina), this protein is Integration host factor subunit alpha.